The primary structure comprises 756 residues: Catalase-peroxidase (756 aa).

Positions 91 to 244 (WHSAGTYRTG…LAAVQMGLIY (154 aa)) form a cross-link, tryptophyl-tyrosyl-methioninium (Trp-Tyr) (with M-270). His92 acts as the Proton acceptor in catalysis. The tract at residues 198–230 (AQKKMQQPGDGTLVAEPENHANEESRTASGERN) is disordered. The span at 214 to 223 (PENHANEESR) shows a compositional bias: basic and acidic residues. The segment at residues 244–270 (YVNPEGPEGVPDPVASARDIRETFGRM) is a cross-link (tryptophyl-tyrosyl-methioninium (Tyr-Met) (with W-91)). Heme b is bound at residue His285.

It belongs to the peroxidase family. Peroxidase/catalase subfamily. In terms of assembly, homodimer or homotetramer. Heme b is required as a cofactor. Formation of the three residue Trp-Tyr-Met cross-link is important for the catalase, but not the peroxidase activity of the enzyme.

The enzyme catalyses H2O2 + AH2 = A + 2 H2O. It carries out the reaction 2 H2O2 = O2 + 2 H2O. Bifunctional enzyme with both catalase and broad-spectrum peroxidase activity. The polypeptide is Catalase-peroxidase (Pseudomonas syringae pv. syringae (strain B728a)).